A 485-amino-acid chain; its full sequence is Aspartyl/glutamyl-tRNA(Asn/Gln) amidotransferase subunit B (485 aa).

The protein belongs to the GatB/GatE family. GatB subfamily. As to quaternary structure, heterotrimer of A, B and C subunits.

It catalyses the reaction L-glutamyl-tRNA(Gln) + L-glutamine + ATP + H2O = L-glutaminyl-tRNA(Gln) + L-glutamate + ADP + phosphate + H(+). The enzyme catalyses L-aspartyl-tRNA(Asn) + L-glutamine + ATP + H2O = L-asparaginyl-tRNA(Asn) + L-glutamate + ADP + phosphate + 2 H(+). In terms of biological role, allows the formation of correctly charged Asn-tRNA(Asn) or Gln-tRNA(Gln) through the transamidation of misacylated Asp-tRNA(Asn) or Glu-tRNA(Gln) in organisms which lack either or both of asparaginyl-tRNA or glutaminyl-tRNA synthetases. The reaction takes place in the presence of glutamine and ATP through an activated phospho-Asp-tRNA(Asn) or phospho-Glu-tRNA(Gln). In Cupriavidus pinatubonensis (strain JMP 134 / LMG 1197) (Cupriavidus necator (strain JMP 134)), this protein is Aspartyl/glutamyl-tRNA(Asn/Gln) amidotransferase subunit B.